We begin with the raw amino-acid sequence, 70 residues long: Peptide BmKn2 (70 aa).

The first 23 residues, 1–23 (MKSQTFFLLFLVVLLLAISQSEA), serve as a signal peptide directing secretion. Residue Phe-36 is modified to Phenylalanine amide. Positions 40–70 (SMRDMDTMKYLYDPSLSAADLKTLQKLMENY) are excised as a propeptide.

This sequence belongs to the non-disulfide-bridged peptide (NDBP) superfamily. Short antimicrobial peptide (group 4) family. As to expression, expressed by the venom gland.

Its subcellular location is the secreted. It is found in the target cell membrane. Functionally, antimicrobial peptide with potent activity against bacteria. Has strong antibacterial activity against Gram-positive bacteria S.aureus, M.luteus, B.subtilis, and Gram-negative bacteria E.coli, P.aeruginosa and N.gonorrhoeae. Also shows low activity against HIV-1 PV. The chain is Peptide BmKn2 from Olivierus martensii (Manchurian scorpion).